A 304-amino-acid polypeptide reads, in one-letter code: Secreted mono- and diacylglycerol lipase LIP1 (304 aa).

The first 19 residues, 1-19 (MLFSRFVLLAFGSVAAVSA), serve as a signal peptide directing secretion. O-linked (Man...) threonine glycosylation occurs at T32. A disulfide bond links C57 and C297. The Nucleophile role is filled by S171. The active site involves D228. The N-linked (GlcNAc...) asparagine glycan is linked to N253. The active site involves H281.

The protein belongs to the AB hydrolase superfamily. Lipase family. Class 3 subfamily.

Its subcellular location is the secreted. The protein localises to the cell wall. The catalysed reaction is a monoacylglycerol + H2O = glycerol + a fatty acid + H(+). The enzyme catalyses a diacylglycerol + H2O = a monoacylglycerol + a fatty acid + H(+). RHC 80267, a well-known inhibitor of diacylglycerol lipases from mammals, also acts as an inhibitor for LIP1/SMG1. In terms of biological role, secreted lipase involved in Dandruff and seborrheic dermatitis (D/SD) probably via lipase-mediated breakdown of sebaceous lipids and release of irritating free fatty acids. Shows activity against monoglyceride and diglyceride substrates, but not triglyceride substrates and does not exhibit regio-selective production of diacylglycerols. Able to hydrolyze diacylglycerols such as distearin, dilinolein, dipalmitoylglycerol and dipalmitolein. Cleaves oleic acid from 1,2 isomers of diolein on both the 1 and the 2 position of the glycerol backbone, resulting mainly in free fatty acids but no monoolein is detected. Shows activity on monoolein and liberates mostly free fatty acids, but can also perform the reverse reaction and produce diolein. The polypeptide is Secreted mono- and diacylglycerol lipase LIP1 (Malassezia globosa (strain ATCC MYA-4612 / CBS 7966) (Dandruff-associated fungus)).